The following is a 621-amino-acid chain: Lethal(3)malignant brain tumor-like protein 4 (621 aa).

The disordered stretch occupies residues 1-48; it reads MRQPNRKRKLSLESTERMNQDRCTGQTEEEKKPGEVTTPSKRESSVTT. 2 stretches are compositionally biased toward basic and acidic residues: residues 10–20 and 28–44; these read LSLESTERMNQ and EEEK…KRES. MBT repeat units follow at residues 52–152, 160–260, and 269–364; these read WSWE…LHIP, FVWM…LVAP, and FSWT…LEVP. A CCHHC-type zinc finger spans residues 370 to 414; that stretch reads VKILPGQPACPTPGCRGIGHIRGPRYAGHHSAFGCPYSDVNLKRE. 4 residues coordinate Zn(2+): cysteine 379, cysteine 384, histidine 398, and cysteine 404. An SAM domain is found at 543–607; the sequence is WTVDEVAEFV…YNSILMFRNS (65 aa).

It localises to the nucleus. Putative Polycomb group (PcG) protein. PcG proteins maintain the transcriptionally repressive state of genes, probably via a modification of chromatin, rendering it heritably changed in its expressibility. This chain is Lethal(3)malignant brain tumor-like protein 4 (L3mbtl4), found in Mus musculus (Mouse).